The chain runs to 176 residues: NAD(P)H-quinone oxidoreductase subunit J (176 aa).

The span at 1 to 10 (MSETPTSPNQ) shows a compositional bias: polar residues. The tract at residues 1-22 (MSETPTSPNQDLPEAPQAGPLS) is disordered.

It belongs to the complex I 30 kDa subunit family. NDH-1 can be composed of about 15 different subunits; different subcomplexes with different compositions have been identified which probably have different functions.

The protein localises to the cellular thylakoid membrane. It carries out the reaction a plastoquinone + NADH + (n+1) H(+)(in) = a plastoquinol + NAD(+) + n H(+)(out). It catalyses the reaction a plastoquinone + NADPH + (n+1) H(+)(in) = a plastoquinol + NADP(+) + n H(+)(out). In terms of biological role, NDH-1 shuttles electrons from an unknown electron donor, via FMN and iron-sulfur (Fe-S) centers, to quinones in the respiratory and/or the photosynthetic chain. The immediate electron acceptor for the enzyme in this species is believed to be plastoquinone. Couples the redox reaction to proton translocation, and thus conserves the redox energy in a proton gradient. Cyanobacterial NDH-1 also plays a role in inorganic carbon-concentration. The chain is NAD(P)H-quinone oxidoreductase subunit J from Synechococcus sp. (strain RCC307).